The chain runs to 265 residues: Shikimate dehydrogenase (NADP(+)) (265 aa).

Shikimate contacts are provided by residues 15–17 (SLS) and threonine 62. The active-site Proton acceptor is the lysine 66. Positions 87 and 102 each coordinate shikimate. NADP(+) is bound by residues 125–129 (GAGGA), 149–154 (NRTLEK), and leucine 209. Tyrosine 211 provides a ligand contact to shikimate. Residue glycine 233 coordinates NADP(+).

This sequence belongs to the shikimate dehydrogenase family. Homodimer.

It carries out the reaction shikimate + NADP(+) = 3-dehydroshikimate + NADPH + H(+). Its pathway is metabolic intermediate biosynthesis; chorismate biosynthesis; chorismate from D-erythrose 4-phosphate and phosphoenolpyruvate: step 4/7. In terms of biological role, involved in the biosynthesis of the chorismate, which leads to the biosynthesis of aromatic amino acids. Catalyzes the reversible NADPH linked reduction of 3-dehydroshikimate (DHSA) to yield shikimate (SA). This Legionella pneumophila subsp. pneumophila (strain Philadelphia 1 / ATCC 33152 / DSM 7513) protein is Shikimate dehydrogenase (NADP(+)).